We begin with the raw amino-acid sequence, 594 residues long: 4-alpha-glucanotransferase DPE1, chloroplastic/amyloplastic (594 aa).

Residues 1 to 37 (MATLSLPLPHLTQAIPARARPRPRPLRGIPARLLSCR) constitute a chloroplast transit peptide.

Belongs to the disproportionating enzyme family.

The protein localises to the plastid. It is found in the chloroplast. The protein resides in the amyloplast. It catalyses the reaction Transfers a segment of a (1-&gt;4)-alpha-D-glucan to a new position in an acceptor, which may be glucose or a (1-&gt;4)-alpha-D-glucan.. Chloroplastic alpha-glucanotransferase involved in maltotriose metabolism. The polypeptide is 4-alpha-glucanotransferase DPE1, chloroplastic/amyloplastic (DPE1) (Oryza sativa subsp. japonica (Rice)).